We begin with the raw amino-acid sequence, 32 residues long: Photosystem II reaction center protein T (32 aa).

Residues 3–23 (ALVYTFLLIGTLMVIFFAVFF) form a helical membrane-spanning segment.

The protein belongs to the PsbT family. As to quaternary structure, PSII is composed of 1 copy each of membrane proteins PsbA, PsbB, PsbC, PsbD, PsbE, PsbF, PsbH, PsbI, PsbJ, PsbK, PsbL, PsbM, PsbT, PsbX, PsbY, PsbZ, Psb30/Ycf12, at least 3 peripheral proteins of the oxygen-evolving complex and a large number of cofactors. It forms dimeric complexes.

Its subcellular location is the plastid. The protein resides in the chloroplast thylakoid membrane. Its function is as follows. Found at the monomer-monomer interface of the photosystem II (PS II) dimer, plays a role in assembly and dimerization of PSII. PSII is a light-driven water plastoquinone oxidoreductase, using light energy to abstract electrons from H(2)O, generating a proton gradient subsequently used for ATP formation. This Thalassiosira pseudonana (Marine diatom) protein is Photosystem II reaction center protein T.